Consider the following 447-residue polypeptide: Adenylosuccinate synthetase (447 aa).

Residues 35–41 (GDEGKGK) and 63–65 (GHT) contribute to the GTP site. The active-site Proton acceptor is Asp36. Positions 36 and 63 each coordinate Mg(2+). Residues 36-39 (DEGK), 61-64 (NAGH), Thr153, Arg167, Asn245, Thr260, and Arg324 contribute to the IMP site. The active-site Proton donor is the His64. 320-326 (VTTKRKR) is a binding site for substrate. Residues Arg326, 352–354 (KLD), and 435–437 (GVG) each bind GTP.

Belongs to the adenylosuccinate synthetase family. Homodimer. Mg(2+) serves as cofactor.

It localises to the cytoplasm. It carries out the reaction IMP + L-aspartate + GTP = N(6)-(1,2-dicarboxyethyl)-AMP + GDP + phosphate + 2 H(+). The protein operates within purine metabolism; AMP biosynthesis via de novo pathway; AMP from IMP: step 1/2. Plays an important role in the de novo pathway and in the salvage pathway of purine nucleotide biosynthesis. Catalyzes the first committed step in the biosynthesis of AMP from IMP. The sequence is that of Adenylosuccinate synthetase from Drosophila sechellia (Fruit fly).